Here is a 343-residue protein sequence, read N- to C-terminus: tRNA N6-adenosine threonylcarbamoyltransferase (343 aa).

Fe cation-binding residues include H111 and H115. Substrate is bound by residues 133 to 137 (AVSGG), D166, G179, D183, and N273. Residue D301 coordinates Fe cation.

The protein belongs to the KAE1 / TsaD family. Fe(2+) serves as cofactor.

It localises to the cytoplasm. It carries out the reaction L-threonylcarbamoyladenylate + adenosine(37) in tRNA = N(6)-L-threonylcarbamoyladenosine(37) in tRNA + AMP + H(+). Functionally, required for the formation of a threonylcarbamoyl group on adenosine at position 37 (t(6)A37) in tRNAs that read codons beginning with adenine. Is involved in the transfer of the threonylcarbamoyl moiety of threonylcarbamoyl-AMP (TC-AMP) to the N6 group of A37, together with TsaE and TsaB. TsaD likely plays a direct catalytic role in this reaction. The sequence is that of tRNA N6-adenosine threonylcarbamoyltransferase from Geotalea uraniireducens (strain Rf4) (Geobacter uraniireducens).